The following is a 171-amino-acid chain: Large ribosomal subunit protein uL15 (171 aa).

Polar residues predominate over residues 1–10 (MKLNEISDNN). Disordered stretches follow at residues 1–44 (MKLN…RSGV) and 150–171 (LPEAQPSEQEKKAARREANKAK). Positions 21-35 (RGIGSGKGKTAGRGQ) are enriched in gly residues. Over residues 157–171 (EQEKKAARREANKAK) the composition is skewed to basic and acidic residues.

The protein belongs to the universal ribosomal protein uL15 family. As to quaternary structure, part of the 50S ribosomal subunit.

Binds to the 23S rRNA. The polypeptide is Large ribosomal subunit protein uL15 (Novosphingobium aromaticivorans (strain ATCC 700278 / DSM 12444 / CCUG 56034 / CIP 105152 / NBRC 16084 / F199)).